Consider the following 492-residue polypeptide: Catalase isozyme A (492 aa).

The tract at residues 1–23 is disordered; it reads MDPCKFRPSSSFDTKTTTTNAGA. The segment covering 8 to 21 has biased composition (polar residues); sequence PSSSFDTKTTTTNA. Residues His65 and Asn138 contribute to the active site. Tyr348 contacts heme.

It belongs to the catalase family. Homotetramer. Heme is required as a cofactor.

Its subcellular location is the peroxisome. It is found in the glyoxysome. The enzyme catalyses 2 H2O2 = O2 + 2 H2O. Occurs in almost all aerobically respiring organisms and serves to protect cells from the toxic effects of hydrogen peroxide. This is Catalase isozyme A from Oryza sativa subsp. indica (Rice).